A 397-amino-acid polypeptide reads, in one-letter code: Na(+)/H(+) antiporter NhaA 3 (397 aa).

11 helical membrane passes run 18 to 38 (AGGI…NSPF), 63 to 83 (LLLW…GLEL), 98 to 118 (IALP…IYWW), 129 to 149 (GWAI…ALLG), 158 to 178 (IFLT…IAFF), 181 to 201 (SKIS…LFIC), 207 to 224 (TTLR…VALL), 269 to 289 (VAFL…FIGM), 306 to 326 (LFFG…LFGW), 340 to 360 (GVAV…SLAF), and 373 to 393 (LGIV…LRSA).

Belongs to the NhaA Na(+)/H(+) (TC 2.A.33) antiporter family.

It is found in the cell inner membrane. The catalysed reaction is Na(+)(in) + 2 H(+)(out) = Na(+)(out) + 2 H(+)(in). In terms of biological role, na(+)/H(+) antiporter that extrudes sodium in exchange for external protons. The protein is Na(+)/H(+) antiporter NhaA 3 of Saccharophagus degradans (strain 2-40 / ATCC 43961 / DSM 17024).